A 277-amino-acid chain; its full sequence is Elongation factor 1-delta (277 aa).

Position 2 is an N-acetylalanine (A2). N6-acetyllysine is present on K17. Phosphoserine occurs at positions 37, 44, 60, 86, and 106. K107 is modified (N6-acetyllysine). Positions 113–171 (SALEKSSPAHRATTPQTQHVSPMRQVEPPSRKAATATEDDEDDDIDLFGSDEEEDKEAA) are disordered. K117 carries the post-translational modification N6-acetyllysine; alternate. The residue at position 117 (K117) is an N6-succinyllysine; alternate. At S119 the chain carries Phosphoserine. T129 is modified (phosphothreonine). Residue S133 is modified to Phosphoserine. Position 147 is a phosphothreonine (T147). Over residues 149–168 (TEDDEDDDIDLFGSDEEEDK) the composition is skewed to acidic residues. The residue at position 162 (S162) is a Phosphoserine; by CK2.

Belongs to the EF-1-beta/EF-1-delta family. In terms of assembly, EF-1 is composed of 4 subunits: alpha, beta, delta, and gamma.

Its function is as follows. EF-1-beta and EF-1-delta stimulate the exchange of GDP bound to EF-1-alpha to GTP. This Ovis aries (Sheep) protein is Elongation factor 1-delta (EEF1D).